Here is a 506-residue protein sequence, read N- to C-terminus: GMP synthase [glutamine-hydrolyzing] (506 aa).

The Glutamine amidotransferase type-1 domain occupies 4–192; the sequence is KLIILDFGSQ…FLDICGMKRD (189 aa). Cys-79 acts as the Nucleophile in catalysis. Catalysis depends on residues His-167 and Glu-169. Residues 193–381 enclose the GMPS ATP-PPase domain; that stretch reads WTPASFIEAT…LGMMPHLIHR (189 aa). Residue 220–226 participates in ATP binding; the sequence is SGGVDSS.

In terms of assembly, homodimer.

The catalysed reaction is XMP + L-glutamine + ATP + H2O = GMP + L-glutamate + AMP + diphosphate + 2 H(+). It functions in the pathway purine metabolism; GMP biosynthesis; GMP from XMP (L-Gln route): step 1/1. Its function is as follows. Catalyzes the synthesis of GMP from XMP. In Porphyromonas gingivalis (strain ATCC 33277 / DSM 20709 / CIP 103683 / JCM 12257 / NCTC 11834 / 2561), this protein is GMP synthase [glutamine-hydrolyzing].